Here is a 446-residue protein sequence, read N- to C-terminus: Probable glycine dehydrogenase (decarboxylating) subunit 1 (446 aa).

This sequence belongs to the GcvP family. N-terminal subunit subfamily. The glycine cleavage system is composed of four proteins: P, T, L and H. In this organism, the P 'protein' is a heterodimer of two subunits.

The enzyme catalyses N(6)-[(R)-lipoyl]-L-lysyl-[glycine-cleavage complex H protein] + glycine + H(+) = N(6)-[(R)-S(8)-aminomethyldihydrolipoyl]-L-lysyl-[glycine-cleavage complex H protein] + CO2. The glycine cleavage system catalyzes the degradation of glycine. The P protein binds the alpha-amino group of glycine through its pyridoxal phosphate cofactor; CO(2) is released and the remaining methylamine moiety is then transferred to the lipoamide cofactor of the H protein. The chain is Probable glycine dehydrogenase (decarboxylating) subunit 1 from Protochlamydia amoebophila (strain UWE25).